The primary structure comprises 698 residues: Polyphosphate kinase 1 (698 aa).

Asparagine 46 serves as a coordination point for ATP. Residues arginine 377 and arginine 407 each coordinate Mg(2+). Catalysis depends on histidine 437, which acts as the Phosphohistidine intermediate. ATP contacts are provided by tyrosine 470, arginine 566, and histidine 594.

The protein belongs to the polyphosphate kinase 1 (PPK1) family. Mg(2+) is required as a cofactor. In terms of processing, an intermediate of this reaction is the autophosphorylated ppk in which a phosphate is covalently linked to a histidine residue through a N-P bond.

It carries out the reaction [phosphate](n) + ATP = [phosphate](n+1) + ADP. Its function is as follows. Catalyzes the reversible transfer of the terminal phosphate of ATP to form a long-chain polyphosphate (polyP). The sequence is that of Polyphosphate kinase 1 from Chlorobaculum tepidum (strain ATCC 49652 / DSM 12025 / NBRC 103806 / TLS) (Chlorobium tepidum).